The sequence spans 304 residues: D-alanine--D-alanine ligase (304 aa).

In terms of domain architecture, ATP-grasp spans 101–298 (KKIFIKNKIL…FIKLIEWILK (198 aa)). An ATP-binding site is contributed by 131–184 (EKNLKFPVVVKPINEGSSVHVYICDKTNILKNLKVLKSYNEILIEEFIPGREIQ). Mg(2+) contacts are provided by Asp253, Glu265, and Asn267.

The protein belongs to the D-alanine--D-alanine ligase family. Mg(2+) is required as a cofactor. Requires Mn(2+) as cofactor.

The protein resides in the cytoplasm. It carries out the reaction 2 D-alanine + ATP = D-alanyl-D-alanine + ADP + phosphate + H(+). Its pathway is cell wall biogenesis; peptidoglycan biosynthesis. In terms of biological role, cell wall formation. The chain is D-alanine--D-alanine ligase from Pelagibacter ubique (strain HTCC1062).